We begin with the raw amino-acid sequence, 239 residues long: uncharacterized protein (239 aa).

The segment at 94–114 (CEVSGKEIPFERLEALPTATT) adopts a dksA C4-type; degenerate zinc-finger fold. A compositionally biased stretch (acidic residues) spans 133 to 158 (ETPFGQFEFDDDEEIRAPYDSEDSYQ). A disordered region spans residues 133-182 (ETPFGQFEFDDDEEIRAPYDSEDSYQDVEKYGNSQTPQDMENPPLSYDDM).

This is an uncharacterized protein from Bacillus subtilis (strain 168).